Consider the following 146-residue polypeptide: Putative pre-16S rRNA nuclease (146 aa).

Belongs to the YqgF nuclease family.

The protein resides in the cytoplasm. In terms of biological role, could be a nuclease involved in processing of the 5'-end of pre-16S rRNA. This Pseudomonas syringae pv. syringae (strain B728a) protein is Putative pre-16S rRNA nuclease.